Reading from the N-terminus, the 439-residue chain is Transcription factor pydF (439 aa).

Positions 1-18 (MGRPQRADKQRRETDGPQ) are enriched in basic and acidic residues. Disordered stretches follow at residues 1-53 (MGRP…GYAR), 143-177 (HVEK…QAVE), and 239-262 (AFRD…MQQH). Residues 20–35 (SRPSLTQAQKNSTTIR) are compositionally biased toward polar residues. Positions 143-153 (HVEKATAERPG) are enriched in basic and acidic residues. A compositionally biased stretch (low complexity) spans 157–172 (SSSPSSSLLRTSSSPS). Residues 243–260 (GQNNGTSRPNTAASQNMQ) show a composition bias toward polar residues.

The protein resides in the nucleus. Functionally, transcription factor; part of the gene cluster that mediates the biosynthesis of pyrrocidines, fungal natural products containing a macrocyclic para-cyclophane connected to a decahydrofluorene ring system that show potent antibiotic activities toward Gram-negative bacteria. This Acremonium sp protein is Transcription factor pydF.